The chain runs to 248 residues: Serine/arginine-rich splicing factor 1 (248 aa).

Serine 2 is modified (N-acetylserine). Serine 2 bears the Phosphoserine mark. Residues 16-91 (CRIYVGNLPP…YRLRVEFPRS (76 aa)) enclose the RRM 1 domain. Lysine 30 is covalently cross-linked (Glycyl lysine isopeptide (Lys-Gly) (interchain with G-Cter in SUMO2)). Lysine 38 is subject to N6-acetyllysine; alternate. A Glycyl lysine isopeptide (Lys-Gly) (interchain with G-Cter in SUMO2); alternate cross-link involves residue lysine 38. The segment at 88 to 134 (FPRSGRGTGRGGGGGGGGGAPRGRYGPPSRRSENRVVVSGLPPSGSW) is disordered. An asymmetric dimethylarginine; alternate mark is found at arginine 93, arginine 97, and arginine 109. Omega-N-methylarginine; alternate is present on residues arginine 93, arginine 97, and arginine 109. The span at 93 to 108 (RGTGRGGGGGGGGGAP) shows a compositional bias: gly residues. Arginine 111 is subject to Omega-N-methylarginine. Residues 121-195 (NRVVVSGLPP…ETAYIRVKVD (75 aa)) enclose the RRM 2 domain. Serine 133 carries the phosphoserine modification. An N6-acetyllysine modification is found at lysine 179. Positions 191–248 (RVKVDGPRSPSYGRSRSRSRSRSRNRSRSNSRSRSYSPRRSRGSPRYSPRHSRSRSRT) are disordered. The tract at residues 198 to 247 (RSPSYGRSRSRSRSRSRNRSRSNSRSRSYSPRRSRGSPRYSPRHSRSRSR) is interaction with SAFB1. Phosphoserine occurs at positions 199 and 201. Tyrosine 202 is subject to Phosphotyrosine. Residues serine 205, serine 207, serine 209, serine 231, serine 234, and serine 238 each carry the phosphoserine modification. Residues 205–248 (SRSRSRSRSRNRSRSNSRSRSYSPRRSRGSPRYSPRHSRSRSRT) show a composition bias toward basic residues.

Belongs to the splicing factor SR family. As to quaternary structure, consists of two polypeptides of p32 and p33. Identified in the spliceosome C complex. Component of a ribonucleoprotein complex containing mRNAs and RNA-binding proteins including DDX5, HNRNPH2 and SRSF1 as well as splicing regulator ARVCF. In vitro, self-associates and binds SRSF2, SNRNP70 and U2AF1 but not U2AF2. Binds SREK1/SFRS12. Interacts with SAFB/SAFB1. Interacts with PSIP1/LEDGF. Interacts with RSRC1 (via Arg/Ser-rich domain). Interacts with ZRSR2/U2AF1-RS2. Interacts with CCDC55 (via C-terminus). Interacts with SRPK1 and a sliding docking interaction is essential for its sequential and processive phosphorylation by SRPK1. Interacts with NXF1. Interacts with CCNL1, CCNL2 and CDK11B. Interacts with RRP1B. Interacts (when phosphorylated in its RS domain) with TNPO3; promoting nuclear import. Interacts with ILDR1 (via C-terminus) and ILDR2. In terms of processing, phosphorylated by CLK1, CLK2, CLK3 and CLK4. Phosphorylated by SRPK1 at multiple serines in its RS domain via a directional (C-terminal to N-terminal) and a dual-track mechanism incorporating both processive phosphorylation (in which the kinase stays attached to the substrate after each round of phosphorylation) and distributive phosphorylation steps (in which the kinase and substrate dissociate after each phosphorylation event). The RS domain of SRSF1 binds to a docking groove in the large lobe of the kinase domain of SRPK1 and this induces certain structural changes in SRPK1 and/or RRM 2 domain of SRSF1, allowing RRM 2 to bind the kinase and initiate phosphorylation. The cycles continue for several phosphorylation steps in a processive manner (steps 1-8) until the last few phosphorylation steps (approximately steps 9-12). During that time, a mechanical stress induces the unfolding of the beta-4 motif in RRM 2, which then docks at the docking groove of SRPK1. This also signals RRM 2 to begin to dissociate, which facilitates SRSF1 dissociation after phosphorylation is completed. Asymmetrically dimethylated at arginines, probably by PRMT1, methylation promotes localization to nuclear speckles.

Its subcellular location is the cytoplasm. It is found in the nucleus speckle. In terms of biological role, plays a role in preventing exon skipping, ensuring the accuracy of splicing and regulating alternative splicing. Interacts with other spliceosomal components, via the RS domains, to form a bridge between the 5'- and 3'-splice site binding components, U1 snRNP and U2AF. Can stimulate binding of U1 snRNP to a 5'-splice site-containing pre-mRNA. Binds to purine-rich RNA sequences, either the octamer, 5'-RGAAGAAC-3' (r=A or G) or the decamers, AGGACAGAGC/AGGACGAAGC. Binds preferentially to the 5'-CGAGGCG-3' motif in vitro. Three copies of the octamer constitute a powerful splicing enhancer in vitro, the ASF/SF2 splicing enhancer (ASE) which can specifically activate ASE-dependent splicing. May function as export adapter involved in mRNA nuclear export through the TAP/NXF1 pathway. This chain is Serine/arginine-rich splicing factor 1 (SRSF1), found in Pongo abelii (Sumatran orangutan).